Consider the following 235-residue polypeptide: Urease accessory protein UreF (235 aa).

The protein belongs to the UreF family. As to quaternary structure, ureD, UreF and UreG form a complex that acts as a GTP-hydrolysis-dependent molecular chaperone, activating the urease apoprotein by helping to assemble the nickel containing metallocenter of UreC. The UreE protein probably delivers the nickel.

The protein resides in the cytoplasm. Required for maturation of urease via the functional incorporation of the urease nickel metallocenter. The protein is Urease accessory protein UreF of Haemophilus influenzae (strain PittGG).